A 205-amino-acid chain; its full sequence is MTERGLLIVLSGPSGVGKGTVREAVFKDPETSFDYSISMTTRLPREGEQDGVDYYFRSREVFEQAIKDGKMLEYAEYVGNYYGTPLEYVEEKLAAGIDIFLEIEVQGAMQVRKAMPEGIFIFLTPPDLSELKNRIIGRGTESMEVVEERMETAKKEIEMMASYDYAVVNDVVSKAVQKIKGIVETEHLKTERVIHRYKKMLEGLQ.

In terms of domain architecture, Guanylate kinase-like spans 5–184; the sequence is GLLIVLSGPS…AVQKIKGIVE (180 aa). 12 to 19 contributes to the ATP binding site; sequence GPSGVGKG.

Belongs to the guanylate kinase family.

The protein resides in the cytoplasm. The catalysed reaction is GMP + ATP = GDP + ADP. Its function is as follows. Essential for recycling GMP and indirectly, cGMP. In Listeria innocua serovar 6a (strain ATCC BAA-680 / CLIP 11262), this protein is Guanylate kinase.